Here is a 1196-residue protein sequence, read N- to C-terminus: Major DNA-binding protein (1196 aa).

Residues 499–512 (CNLCTFDTRHACVH) fold into a zinc finger. 2 consecutive short sequence motifs (required for filament formation) follow at residues 843-844 (FW) and 1142-1144 (FNF). The disordered stretch occupies residues 1158–1196 (GGPGAPGPAFAGRKRAFHGDDPFGEGPPDKKGDLTLDML). Residues 1170–1196 (RKRAFHGDDPFGEGPPDKKGDLTLDML) are required for nuclear localization. Residues 1174-1196 (FHGDDPFGEGPPDKKGDLTLDML) are compositionally biased toward basic and acidic residues.

This sequence belongs to the herpesviridae major DNA-binding protein family. As to quaternary structure, homooligomers. Forms double-helical filaments necessary for the formation of replication compartments within the host nucleus. Interacts with the origin-binding protein. Interacts with the helicase primase complex; this interaction stimulates primer synthesis activity of the helicase-primase complex. Interacts with the DNA polymerase. Interacts with the alkaline exonuclease; this interaction increases its nuclease processivity.

It localises to the host nucleus. Its function is as follows. Plays several crucial roles in viral infection. Participates in the opening of the viral DNA origin to initiate replication by interacting with the origin-binding protein. May disrupt loops, hairpins and other secondary structures present on ssDNA to reduce and eliminate pausing of viral DNA polymerase at specific sites during elongation. Promotes viral DNA recombination by performing strand-transfer, characterized by the ability to transfer a DNA strand from a linear duplex to a complementary single-stranded DNA circle. Can also catalyze the renaturation of complementary single strands. Additionally, reorganizes the host cell nucleus, leading to the formation of prereplicative sites and replication compartments. This process is driven by the protein which can form double-helical filaments in the absence of DNA. In Human herpesvirus 1 (strain KOS) (HHV-1), this protein is Major DNA-binding protein.